The chain runs to 292 residues: Very long chain fatty acid elongase 2 (292 aa).

Transmembrane regions (helical) follow at residues 29–49 (WFLL…LLSI), 67–87 (ILTL…VELI), 115–135 (VLWW…FFVL), 153–173 (MFNI…FFGP), 175–195 (LNSF…FPSM), 205–225 (LTQA…SAVV), and 230–250 (FPFG…ILFL). Positions 289 to 292 (KKAQ) match the Di-lysine motif motif.

It belongs to the ELO family. ELOVL2 subfamily. In terms of assembly, interacts with TECR. As to expression, highly expressed in testis, lower level in liver. Weakly expressed in white adipose tissue, brain and kidney.

It localises to the endoplasmic reticulum membrane. It catalyses the reaction a very-long-chain acyl-CoA + malonyl-CoA + H(+) = a very-long-chain 3-oxoacyl-CoA + CO2 + CoA. The enzyme catalyses (5Z,8Z,11Z,14Z)-eicosatetraenoyl-CoA + malonyl-CoA + H(+) = (7Z,10Z,13Z,16Z)-3-oxodocosatetraenoyl-CoA + CO2 + CoA. The catalysed reaction is (7Z,10Z,13Z,16Z)-docosatetraenoyl-CoA + malonyl-CoA + H(+) = (9Z,12Z,15Z,18Z)-3-oxotetracosatetraenoyl-CoA + CO2 + CoA. It carries out the reaction (5Z,8Z,11Z,14Z,17Z)-eicosapentaenoyl-CoA + malonyl-CoA + H(+) = 3-oxo-(7Z,10Z,13Z,16Z,19Z)-docosapentaenoyl-CoA + CO2 + CoA. It catalyses the reaction (7Z,10Z,13Z,16Z,19Z)-docosapentaenoyl-CoA + malonyl-CoA + H(+) = (9Z,12Z,15Z,18Z,21Z)-3-oxotetracosapentaenoyl-CoA + CO2 + CoA. It participates in lipid metabolism; polyunsaturated fatty acid biosynthesis. Catalyzes the first and rate-limiting reaction of the four reactions that constitute the long-chain fatty acids elongation cycle. This endoplasmic reticulum-bound enzymatic process allows the addition of 2 carbons to the chain of long- and very long-chain fatty acids (VLCFAs) per cycle. Condensing enzyme that catalyzes the synthesis of polyunsaturated very long chain fatty acid (C20- and C22-PUFA), acting specifically toward polyunsaturated acyl-CoA with the higher activity toward C20:4(n-6) acyl-CoA. May participate in the production of polyunsaturated VLCFAs of different chain lengths that are involved in multiple biological processes as precursors of membrane lipids and lipid mediators. Essential for the formation of C24:5(n-6) up to C30:5(n-6) PUFAs in testis, these fatty acids being indispensable for normal spermatogenesis and fertility. The polypeptide is Very long chain fatty acid elongase 2 (Mus musculus (Mouse)).